Consider the following 41-residue polypeptide: MTARKSYTYPIFTVRWLAVHALAVPTVFFLGAITAMQFIQR.

The helical transmembrane segment at W16–A32 threads the bilayer. Position 20 (H20) interacts with heme.

The protein belongs to the PsbE/PsbF family. As to quaternary structure, heterodimer of an alpha subunit and a beta subunit. PSII is composed of 1 copy each of membrane proteins PsbA, PsbB, PsbC, PsbD, PsbE, PsbF, PsbH, PsbI, PsbJ, PsbK, PsbL, PsbM, PsbT, PsbX, PsbY, PsbZ, Psb30/Ycf12, at least 3 peripheral proteins of the oxygen-evolving complex and a large number of cofactors. It forms dimeric complexes. Heme b is required as a cofactor.

The protein localises to the plastid. Its subcellular location is the chloroplast thylakoid membrane. Functionally, this b-type cytochrome is tightly associated with the reaction center of photosystem II (PSII). PSII is a light-driven water:plastoquinone oxidoreductase that uses light energy to abstract electrons from H(2)O, generating O(2) and a proton gradient subsequently used for ATP formation. It consists of a core antenna complex that captures photons, and an electron transfer chain that converts photonic excitation into a charge separation. The protein is Cytochrome b559 subunit beta of Chlorella vulgaris (Green alga).